A 334-amino-acid chain; its full sequence is BTB and MATH domain-containing protein 39 (334 aa).

The 128-residue stretch at 14 to 141 (IVTLVFNIYN…EGRFQIEFDL (128 aa)) folds into the MATH domain. The region spanning 164 to 229 (ADGELITDGK…LQLDSFEVSV (66 aa)) is the BTB domain.

This is BTB and MATH domain-containing protein 39 (bath-39) from Caenorhabditis elegans.